A 247-amino-acid polypeptide reads, in one-letter code: Neurotrophic factor BDNF precursor form (247 aa).

Positions 1–18 are cleaved as a signal peptide; that stretch reads MTILFLTMVISYFGCMKA. Residues 19–128 constitute a propeptide that is removed on maturation; sequence APMKEASVRG…AANMSMRVRR (110 aa). N121 carries N-linked (GlcNAc...) asparagine glycosylation. 3 disulfides stabilise this stretch: C141-C208, C186-C237, and C196-C239.

This sequence belongs to the NGF-beta family. Monomers and homodimers. Binds to NTRK2/TRKB. Can form heterodimers with other neurotrophin family members, such as NTF3 and NTF4 (in vitro), but the physiological relevance of this is not clear. BDNF precursor form: interacts with the heterodimer formed by NGFR and SORCS2. Mature BDNF has much lower affinity for the heterodimer formed by NGFR and SORCS2. Post-translationally, N-glycosylated and glycosulfated, contrary to mature BDNF. Mature BDNF is produced by proteolytic removal of the propeptide, catalyzed by a FURIN family member. In addition, the precursor form is proteolytically cleaved within the propeptide, but this is not an obligatory intermediate for the production of mature BDNF. Can be converted into mature BDNF by plasmin (PLG).

It localises to the secreted. Important signaling molecule that activates signaling cascades downstream of NTRK2. During development, promotes the survival and differentiation of selected neuronal populations of the peripheral and central nervous systems. Participates in axonal growth, pathfinding and in the modulation of dendritic growth and morphology. Major regulator of synaptic transmission and plasticity at adult synapses in many regions of the CNS. The versatility of BDNF is emphasized by its contribution to a range of adaptive neuronal responses including long-term potentiation (LTP), long-term depression (LTD), certain forms of short-term synaptic plasticity, as well as homeostatic regulation of intrinsic neuronal excitability. This chain is Neurotrophic factor BDNF precursor form (BDNF), found in Canis lupus familiaris (Dog).